The primary structure comprises 498 residues: Probable cytosol aminopeptidase (498 aa).

2 residues coordinate Mn(2+): Lys-267 and Asp-272. Lys-279 is a catalytic residue. Positions 290, 349, and 351 each coordinate Mn(2+). Arg-353 is a catalytic residue.

The protein belongs to the peptidase M17 family. The cofactor is Mn(2+).

The protein localises to the cytoplasm. The catalysed reaction is Release of an N-terminal amino acid, Xaa-|-Yaa-, in which Xaa is preferably Leu, but may be other amino acids including Pro although not Arg or Lys, and Yaa may be Pro. Amino acid amides and methyl esters are also readily hydrolyzed, but rates on arylamides are exceedingly low.. It catalyses the reaction Release of an N-terminal amino acid, preferentially leucine, but not glutamic or aspartic acids.. Presumably involved in the processing and regular turnover of intracellular proteins. Catalyzes the removal of unsubstituted N-terminal amino acids from various peptides. This is Probable cytosol aminopeptidase from Dechloromonas aromatica (strain RCB).